We begin with the raw amino-acid sequence, 452 residues long: Argininosuccinate lyase (452 aa).

A disordered region spans residues 431–452 (AFRKDSTGSTSPKWSFRAMRRA).

Belongs to the lyase 1 family. Argininosuccinate lyase subfamily.

The protein resides in the cytoplasm. The catalysed reaction is 2-(N(omega)-L-arginino)succinate = fumarate + L-arginine. The protein operates within amino-acid biosynthesis; L-arginine biosynthesis; L-arginine from L-ornithine and carbamoyl phosphate: step 3/3. This Tremblaya princeps protein is Argininosuccinate lyase.